The chain runs to 312 residues: DDRGK domain-containing protein 1 (312 aa).

The Lumenal segment spans residues 1–2 (ME). A helical transmembrane segment spans residues 3-23 (LIILVGIAIALLVVIITLYLL). Over 24–312 (QKKNAAPETK…ISAGGEEASS (289 aa)) the chain is Cytoplasmic. The interval 30–163 (PETKPAAAPQ…KQQEDLEAEV (134 aa)) is disordered. Residues 52 to 85 (RRAQIARNQRNRLRQNAPAAPAGQVAPAAGAPAA) show a composition bias toward low complexity. The span at 90–99 (DHEDEGQVDA) shows a compositional bias: acidic residues. Over residues 110–163 (LDEKMGAKKRAKMEAKEQKRLQREQELHDREQRKVKEAKEEAERKQQEDLEAEV) the composition is skewed to basic and acidic residues.

It belongs to the DDRGK1 family. In terms of assembly, interacts with Atg9; the interaction is transient.

It localises to the endoplasmic reticulum membrane. Substrate adapter for ufmylation, the covalent attachment of the ubiquitin-like modifier UFM1 to substrate proteins. Required for ufmylation of Atg9; protects the nervous system during aging, possibly by stabilizing Atg9 and supporting its function. The sequence is that of DDRGK domain-containing protein 1 from Drosophila erecta (Fruit fly).